Reading from the N-terminus, the 56-residue chain is Large ribosomal subunit protein bL32 (56 aa).

This sequence belongs to the bacterial ribosomal protein bL32 family.

This is Large ribosomal subunit protein bL32 from Edwardsiella ictaluri (strain 93-146).